Consider the following 487-residue polypeptide: N-succinylglutamate 5-semialdehyde dehydrogenase (487 aa).

The disordered stretch occupies residues 1–23; it reads MTHFIKGQWQAGKGHDVTSSNPA. An NAD(+)-binding site is contributed by 220 to 225; it reads GSSRTG. Catalysis depends on residues Glu-243 and Cys-277.

Belongs to the aldehyde dehydrogenase family. AstD subfamily.

It carries out the reaction N-succinyl-L-glutamate 5-semialdehyde + NAD(+) + H2O = N-succinyl-L-glutamate + NADH + 2 H(+). Its pathway is amino-acid degradation; L-arginine degradation via AST pathway; L-glutamate and succinate from L-arginine: step 4/5. Functionally, catalyzes the NAD-dependent reduction of succinylglutamate semialdehyde into succinylglutamate. The protein is N-succinylglutamate 5-semialdehyde dehydrogenase of Shewanella sp. (strain ANA-3).